Here is a 337-residue protein sequence, read N- to C-terminus: uncharacterized protein (337 aa).

Residues 279–337 (SIVAKRNIKKGEYLSVDNISFKRPGRGIETKYLSIILNRKIKNDKEEDDIIYWDDLLGD) form the AFP-like domain.

This sequence to B.subtilis SpsE.

This is an uncharacterized protein from Methanocaldococcus jannaschii (strain ATCC 43067 / DSM 2661 / JAL-1 / JCM 10045 / NBRC 100440) (Methanococcus jannaschii).